A 649-amino-acid chain; its full sequence is MAISCRQSRVLPMSLPLPLTIPLPLVLVLSLHLSGVCGVIDRLVVQTSSGPVRGRSVTVQGREVHVYTGIPYAKPPVEDLRFRKPVPAEPWHGVLDATGLSATCVQERYEYFPGFSGEEIWNPNTNVSEDCLYINVWAPAKARLRHGRGANGGEHPNGKQADTDHLIHNGNPQNTTNGLPILIWIYGGGFMTGSATLDIYNADIMAAVGNVIVASFQYRVGAFGFLHLAPEMPSEFAEEAPGNVGLWDQALAIRWLKDNAHAFGGNPEWMTLFGESAGSSSVNAQLMSPVTRGLVKRGMMQSGTMNAPWSHMTSEKAVEIGKALINDCNCNASMLKTNPAHVMSCMRSVDAKTISVQQWNSYSGILSFPSAPTIDGAFLPADPMTLMKTADLKDYDILMGNVRDEGTYFLLYDFIDYFDKDDATALPRDKYLEIMNNIFGKATQAEREAIIFQYTSWEGNPGYQNQQQIGRAVGDHFFTCPTNEYAQALAERGASVHYYYFTHRTSTSLWGEWMGVLHGDEIEYFFGQPLNNSLQYRPVERELGKRMLSAVIEFAKTGNPAQDGEEWPNFSKEDPVYYIFSTDDKIEKLARGPLAARCSFWNDYLPKVRSWAGTCDGDSGSASISPRLQLLGIAALIYICAALRTKRVF.

A signal peptide spans 1 to 38 (MAISCRQSRVLPMSLPLPLTIPLPLVLVLSLHLSGVCG). Residues Cys104 and Cys131 are joined by a disulfide bond. Residues Asn126 and Asn174 are each glycosylated (N-linked (GlcNAc...) asparagine). Ser276 (acyl-ester intermediate) is an active-site residue. Cys330 and Cys345 form a disulfide bridge. N-linked (GlcNAc...) asparagine glycosylation is present at Asn331. Catalysis depends on charge relay system residues Glu405 and His518. Cys480 and Cys598 are oxidised to a cystine. Asn531 is a glycosylation site (N-linked (GlcNAc...) asparagine). Ser619 carries GPI-anchor amidated serine lipidation. A propeptide spans 620–649 (GSASISPRLQLLGIAALIYICAALRTKRVF) (removed in mature form).

The protein belongs to the type-B carboxylesterase/lipase family. As to quaternary structure, homodimer; disulfide-linked. The active unit is formed by non-covalent association of the 55 kDa and 16 kDa subunits. Post-translationally, proteolytic cleavage into the 16 kDa subunit and the 55 kDa subunits originates from the hydrophilic peptide, aa 148-180, and is associated with excretion out of the cell. In terms of processing, neither N-glycosylation nor dimerization is required for enzyme activity or substrate specificity, but protects the protein against proteolytic digestion.

The protein localises to the synapse. The protein resides in the cell membrane. It catalyses the reaction acetylcholine + H2O = choline + acetate + H(+). Functionally, rapidly hydrolyzes choline released into the synapse. It can hydrolyze butyrylthiocholine. This is Acetylcholinesterase (Ace) from Drosophila melanogaster (Fruit fly).